Reading from the N-terminus, the 144-residue chain is Sec-independent protein translocase protein TatB (144 aa).

A helical transmembrane segment spans residues 1–21 (MFEIGFWELVLVAIIGIVVVG). The disordered stretch occupies residues 97–144 (KMIDEPPYQEPPPAAHSVQTDAEAYRDTGIEPADKSSSPEHHHDDAAR). The span at 119–144 (EAYRDTGIEPADKSSSPEHHHDDAAR) shows a compositional bias: basic and acidic residues.

Belongs to the TatB family. As to quaternary structure, the Tat system comprises two distinct complexes: a TatABC complex, containing multiple copies of TatA, TatB and TatC subunits, and a separate TatA complex, containing only TatA subunits. Substrates initially bind to the TatABC complex, which probably triggers association of the separate TatA complex to form the active translocon.

It is found in the cell inner membrane. In terms of biological role, part of the twin-arginine translocation (Tat) system that transports large folded proteins containing a characteristic twin-arginine motif in their signal peptide across membranes. Together with TatC, TatB is part of a receptor directly interacting with Tat signal peptides. TatB may form an oligomeric binding site that transiently accommodates folded Tat precursor proteins before their translocation. This chain is Sec-independent protein translocase protein TatB, found in Dichelobacter nodosus (strain VCS1703A).